The sequence spans 350 residues: Vancomycin C-type resistance protein VanC2 (350 aa).

Residues glutamate 14 and serine 187 contribute to the active site. Positions 141-343 (HQAAAAIGVQ…YQELLQKLLV (203 aa)) constitute an ATP-grasp domain. ATP is bound at residue 171-226 (IQTHGFPVFFKPNEAGSSKGITKVTCVEEIASALKEAFTYCSAVLLQKNIAGVEIG). Mg(2+)-binding residues include aspartate 297, glutamate 310, and asparagine 312. Mn(2+)-binding residues include aspartate 297, glutamate 310, and asparagine 312. The active site involves serine 321.

Belongs to the D-alanine--D-alanine ligase family. As to quaternary structure, homodimer. Mg(2+) is required as a cofactor. Requires Mn(2+) as cofactor.

Its subcellular location is the cell membrane. The catalysed reaction is D-serine + D-alanine + ATP = D-alanyl-D-serine + ADP + phosphate + H(+). The protein operates within cell wall biogenesis; peptidoglycan biosynthesis. Inhibited by D-cycloserine. Its function is as follows. Required for low-level resistance to the glycopeptide antibiotic vancomycin. D-alanine--D-alanine ligase of altered specificity, which catalyzes synthesis of D-Ala-D-Ser; produces a peptidoglycan which does not terminate in D-alanine but in D-serine, thus probably reducing affinity for vancomycin. Only insignificant catalytic synthesis of D-Ala-D-Ala in vitro. In Enterococcus casseliflavus (Enterococcus flavescens), this protein is Vancomycin C-type resistance protein VanC2.